The chain runs to 90 residues: uncharacterized protein (90 aa).

Transmembrane regions (helical) follow at residues 17–37 (ILSM…IYLV) and 55–75 (ICFG…WGIA).

The protein resides in the membrane. This is an uncharacterized protein from Schizosaccharomyces pombe (strain 972 / ATCC 24843) (Fission yeast).